Consider the following 496-residue polypeptide: Glutamyl-tRNA(Gln) amidotransferase subunit A (496 aa).

Catalysis depends on charge relay system residues K75 and S150. The Acyl-ester intermediate role is filled by S174.

This sequence belongs to the amidase family. GatA subfamily. As to quaternary structure, heterotrimer of A, B and C subunits.

The enzyme catalyses L-glutamyl-tRNA(Gln) + L-glutamine + ATP + H2O = L-glutaminyl-tRNA(Gln) + L-glutamate + ADP + phosphate + H(+). In terms of biological role, allows the formation of correctly charged Gln-tRNA(Gln) through the transamidation of misacylated Glu-tRNA(Gln) in organisms which lack glutaminyl-tRNA synthetase. The reaction takes place in the presence of glutamine and ATP through an activated gamma-phospho-Glu-tRNA(Gln). The polypeptide is Glutamyl-tRNA(Gln) amidotransferase subunit A (Burkholderia lata (strain ATCC 17760 / DSM 23089 / LMG 22485 / NCIMB 9086 / R18194 / 383)).